The following is a 1019-amino-acid chain: Serine/threonine-protein kinase 31 (1019 aa).

In terms of domain architecture, Tudor spans 78 to 137 (NLDPNKIYGGLFSEDQCWYRCKVLKIISVEKCLVRYIDYGNTEILNRSDIVEIPLELQFS). A coiled-coil region spans residues 298 to 355 (EKIKQDQKLIEENEKLKTEKDALLESYKALELKVEQIAQELQQEKAAAVDLTNHLEYT). The Protein kinase domain occupies 710–1019 (IGLLKYMNSG…TRNGEANFDC (310 aa)). ATP is bound by residues 716–724 (MNSGGLLTM) and Lys-737.

It belongs to the protein kinase superfamily. Ser/Thr protein kinase family. As to expression, testis specific.

The catalysed reaction is L-seryl-[protein] + ATP = O-phospho-L-seryl-[protein] + ADP + H(+). It carries out the reaction L-threonyl-[protein] + ATP = O-phospho-L-threonyl-[protein] + ADP + H(+). The protein is Serine/threonine-protein kinase 31 (STK31) of Homo sapiens (Human).